The following is a 262-amino-acid chain: uncharacterized protein (262 aa).

It belongs to the BtpA family.

This is an uncharacterized protein from Pyrococcus furiosus (strain ATCC 43587 / DSM 3638 / JCM 8422 / Vc1).